The sequence spans 368 residues: 4-hydroxy-3-methylbut-2-en-1-yl diphosphate synthase (flavodoxin) (368 aa).

Positions 271, 274, 306, and 313 each coordinate [4Fe-4S] cluster.

It belongs to the IspG family. It depends on [4Fe-4S] cluster as a cofactor.

The catalysed reaction is (2E)-4-hydroxy-3-methylbut-2-enyl diphosphate + oxidized [flavodoxin] + H2O + 2 H(+) = 2-C-methyl-D-erythritol 2,4-cyclic diphosphate + reduced [flavodoxin]. It functions in the pathway isoprenoid biosynthesis; isopentenyl diphosphate biosynthesis via DXP pathway; isopentenyl diphosphate from 1-deoxy-D-xylulose 5-phosphate: step 5/6. Converts 2C-methyl-D-erythritol 2,4-cyclodiphosphate (ME-2,4cPP) into 1-hydroxy-2-methyl-2-(E)-butenyl 4-diphosphate. This chain is 4-hydroxy-3-methylbut-2-en-1-yl diphosphate synthase (flavodoxin), found in Haemophilus influenzae (strain ATCC 51907 / DSM 11121 / KW20 / Rd).